A 276-amino-acid polypeptide reads, in one-letter code: Exosome complex component RRP43 (276 aa).

Ala-2 is modified (N-acetylalanine).

The protein belongs to the RNase PH family. Component of the RNA exosome core complex (Exo-9), composed of EXOSC1, EXOSC2, EXOSC3, EXOSC4, EXOSC5, EXOSC6, EXOSC7, EXOSC8 and EXOSC9; within the complex interacts with EXOSC5 and EXOSC6. The catalytically inactive RNA exosome core complex (Exo-9) associates with the catalytic subunit EXOSC10/RRP6. Exo-9 may associate with DIS3 to form the nucleolar exosome complex, or DIS3L to form the cytoplasmic exosome complex. Exo-9 is formed by a hexameric base ring consisting of the heterodimers EXOSC4-EXOSC9, EXOSC5-EXOSC8 and EXOSC6-EXOSC7, and a cap ring consisting of EXOSC1, EXOSC2 and EXOSC3. The RNA exosome complex associates with cofactors C1D/RRP47, MPHOSPH6/MPP6 and MTREX/MTR4. Binds outer membrane protein opap from Neisseria gonorrhoeae.

The protein localises to the cytoplasm. The protein resides in the nucleus. Its subcellular location is the nucleolus. Its function is as follows. Non-catalytic component of the RNA exosome complex which has 3'-&gt;5' exoribonuclease activity and participates in a multitude of cellular RNA processing and degradation events. In the nucleus, the RNA exosome complex is involved in proper maturation of stable RNA species such as rRNA, snRNA and snoRNA, in the elimination of RNA processing by-products and non-coding 'pervasive' transcripts, such as antisense RNA species and promoter-upstream transcripts (PROMPTs), and of mRNAs with processing defects, thereby limiting or excluding their export to the cytoplasm. The RNA exosome may be involved in Ig class switch recombination (CSR) and/or Ig variable region somatic hypermutation (SHM) by targeting AICDA deamination activity to transcribed dsDNA substrates. In the cytoplasm, the RNA exosome complex is involved in general mRNA turnover and specifically degrades inherently unstable mRNAs containing AU-rich elements (AREs) within their 3' untranslated regions, and in RNA surveillance pathways, preventing translation of aberrant mRNAs. It seems to be involved in degradation of histone mRNA. The catalytic inactive RNA exosome core complex of 9 subunits (Exo-9) is proposed to play a pivotal role in the binding and presentation of RNA for ribonucleolysis, and to serve as a scaffold for the association with catalytic subunits and accessory proteins or complexes. EXOSC8 binds to ARE-containing RNAs. The sequence is that of Exosome complex component RRP43 (EXOSC8) from Homo sapiens (Human).